Reading from the N-terminus, the 392-residue chain is Phosphoglycerate kinase (392 aa).

Substrate contacts are provided by residues 21–23 (DFN), Arg36, 59–62 (HLGR), Arg113, and Arg146. Residues Lys197, Glu319, and 345–348 (GGDT) contribute to the ATP site.

It belongs to the phosphoglycerate kinase family. As to quaternary structure, monomer.

The protein localises to the cytoplasm. The catalysed reaction is (2R)-3-phosphoglycerate + ATP = (2R)-3-phospho-glyceroyl phosphate + ADP. It functions in the pathway carbohydrate degradation; glycolysis; pyruvate from D-glyceraldehyde 3-phosphate: step 2/5. The sequence is that of Phosphoglycerate kinase from Francisella philomiragia subsp. philomiragia (strain ATCC 25017 / CCUG 19701 / FSC 153 / O#319-036).